The sequence spans 523 residues: Mogroside I-A1 synthase (523 aa).

Catalysis depends on His39, which acts as the Proton acceptor. Asp136 (charge relay) is an active-site residue. 8 residues coordinate UDP-alpha-D-glucose: Ser311, Gln374, Trp392, Asn393, Ser394, Glu397, Asp413, and Gln414.

The protein belongs to the UDP-glycosyltransferase family. Highly expressed in young fruits 15 and 34 days after anthesis (15-DAA and 34-DAA).

The enzyme catalyses mogrol + UDP-alpha-D-glucose = mogroside I-A1 + UDP + H(+). It carries out the reaction mogroside I-A1 + UDP-alpha-D-glucose = mogroside IIE + UDP + H(+). It catalyses the reaction mogroside IE + UDP-alpha-D-glucose = mogroside IIE + UDP + H(+). The catalysed reaction is mogroside II-A1 + UDP-alpha-D-glucose = mogroside IIIX + UDP + H(+). The enzyme catalyses mogroside II-A + UDP-alpha-D-glucose = mogroside III + UDP + H(+). It carries out the reaction mogroside IIE + UDP-alpha-D-glucose = mogroside III-C3(1-&gt;6) + UDP + H(+). It catalyses the reaction mogroside III + UDP-alpha-D-glucose = isomogroside IV + UDP + H(+). The catalysed reaction is mogroside III + UDP-alpha-D-glucose = mogroside IV + UDP + H(+). The enzyme catalyses mogroside IIIX + UDP-alpha-D-glucose = mogroside IVA + UDP + H(+). It carries out the reaction siamenoside I + UDP-alpha-D-glucose = isomogroside V + UDP + H(+). It functions in the pathway secondary metabolite biosynthesis; terpenoid biosynthesis. Its function is as follows. UDP-glycosyltransferase involved in the biosynthesis of cucurbitacin and mogroside tetracyclic triterpene natural products (e.g. siamenoside I and mogrosides IV, V and VI). Cucurbitacins have cytotoxic properties and exhibit deterrent taste as a defense barrier against herbivores. Mogrosides are nonsugar highly oxygenated compounds used as high-intensity zero-calorie sweeteners; they also possess pharmacological properties such as regulating immunity, lowering blood sugar and lipid levels, protecting the liver, and acting as antioxidants and antitumor agents. Catalyzes the C24 primary glucosylation of mogrol and mogroside I-E1, and the C3 primary glucosylation of mogroside I-A1, mogroside II-A1 and mogroside II-A. Also supports branching glucosylations of mogroside II-E, mogroside III, mogroside IIIx and siamenoside I. The sequence is that of Mogroside I-A1 synthase from Siraitia grosvenorii (Monk's fruit).